The sequence spans 211 residues: Formate dehydrogenase, cytochrome b556(fdo) subunit (211 aa).

Over 1–17 the chain is Cytoplasmic; it reads MKRRDTIVRYTAPERIN. H18 lines the heme b pocket. The chain crosses the membrane as a helical span at residues 18 to 32; sequence HWITAFCFILAAVSG. At 33 to 53 the chain is on the periplasmic side; the sequence is LGFLFPSFNWLMQIMGTPQLA. A helical transmembrane segment spans residues 54–72; the sequence is RILHPFVGVVMFASFIIMF. H57 provides a ligand contact to heme b. Residues 73–112 are Cytoplasmic-facing; the sequence is FRYWHHNLINRDDIFWAKNIRKIVVNEEVGDTGRYNFGQK. The chain crosses the membrane as a helical span at residues 113-130; sequence CVFWAAIIFLVLLLVSGV. The Periplasmic segment spans residues 131 to 151; sequence IIWRPYFAPAFSIPVIRFALM. A helical membrane pass occupies residues 152-170; that stretch reads LHSFAAVALIVVIMVHIYA. Heme b-binding residues include H153 and H167. Residues 171 to 211 are Cytoplasmic-facing; sequence ALWVKGTITAMVEGWVTSAWAKKHHPRWYREVRKTTEKKAE.

It belongs to the formate dehydrogenase gamma subunit family. Formate dehydrogenase is a membrane-bound complex, formed by subunits alpha, beta and gamma. It depends on heme as a cofactor.

It localises to the cell inner membrane. In terms of biological role, allows to use formate as major electron donor during aerobic respiration. Subunit gamma is probably the cytochrome b556(FDO) component of the formate dehydrogenase. This Escherichia coli O157:H7 protein is Formate dehydrogenase, cytochrome b556(fdo) subunit (fdoI).